An 885-amino-acid polypeptide reads, in one-letter code: Translation initiation factor IF-2 (885 aa).

Disordered regions lie at residues 135 to 159 (KAKA…AAAE) and 184 to 289 (QAEA…PESM). Residues 184-232 (QAEATKRKQDEEAAKAAEKARLLAEENSKRWAEEERQRLEAERYSDHHI) are compositionally biased toward basic and acidic residues. The span at 253–266 (GRRARNKNTAKSKR) shows a compositional bias: basic residues. Residues 267 to 276 (GGKDARDGRE) show a composition bias toward basic and acidic residues. In terms of domain architecture, tr-type G spans 385–554 (PRAPVVTIMG…LLQAEVLELK (170 aa)). Positions 394 to 401 (GHVDHGKT) are G1. Residue 394 to 401 (GHVDHGKT) participates in GTP binding. Residues 419–423 (GITQH) are G2. The interval 440–443 (DTPG) is G3. Residues 440 to 444 (DTPGH) and 494 to 497 (NKMD) each bind GTP. The interval 494–497 (NKMD) is G4. A G5 region spans residues 530–532 (SAK).

It belongs to the TRAFAC class translation factor GTPase superfamily. Classic translation factor GTPase family. IF-2 subfamily.

The protein localises to the cytoplasm. Its function is as follows. One of the essential components for the initiation of protein synthesis. Protects formylmethionyl-tRNA from spontaneous hydrolysis and promotes its binding to the 30S ribosomal subunits. Also involved in the hydrolysis of GTP during the formation of the 70S ribosomal complex. In Shewanella sp. (strain MR-7), this protein is Translation initiation factor IF-2.